The primary structure comprises 494 residues: Tripartite motif-containing protein 5 (494 aa).

Ala-2 bears the N-acetylalanine mark. Residues 15–59 (CPICLELLTEPLSLDCGHSFCQACITANHKESMLHQGERSCPLCR) form an RING-type zinc finger. The segment at 91 to 132 (QNVDHCARHGEKLLLFCEQDGNIICWLCERSQEHRGHNTFLV) adopts a B box-type zinc-finger fold. Zn(2+) is bound by residues Cys-96, His-99, Cys-118, and His-124. Residues 132-223 (VEEVAQKYRE…RLVQSENDMV (92 aa)) adopt a coiled-coil conformation. A required for interaction with GABARAP and for autophagy region spans residues 186–199 (FKQLRDILDCEESN). Residues 280–494 (PDLKRMLQVL…LPMTLCSPRS (215 aa)) form the B30.2/SPRY domain.

The protein belongs to the TRIM/RBCC family. As to quaternary structure, can form homodimers and homotrimers. In addition to lower-order dimerization, also exhibits a higher-order multimerization and both low- and high-order multimerizations are essential for its restriction activity. Interacts with BTBD1 and BTBD2. Interacts with PSMC4, PSMC5, PSMD7 and HSPA8/HSC70. Interacts (via B30.2/SPRY domain) with HSPA1A/B. Interacts with PSMC2, MAP3K7/TAK1, TAB2 and TAB3. Interacts with SQSTM1. Interacts with TRIM6 and TRIM34. Interacts with ULK1 (phosphorylated form), GABARAP, GABARAPL1, GABARAPL2, MAP1LC3A, MAP1LC3C and BECN1. Post-translationally, degraded in a proteasome-independent fashion in the absence of viral infection but in a proteasome-dependent fashion following exposure to restriction sensitive virus. In terms of processing, autoubiquitinated in a RING finger- and UBE2D2-dependent manner. Monoubiquitinated by TRIM21. Deubiquitinated by Yersinia YopJ. Ubiquitination may not lead to proteasomal degradation.

Its subcellular location is the cytoplasm. The protein resides in the nucleus. The catalysed reaction is S-ubiquitinyl-[E2 ubiquitin-conjugating enzyme]-L-cysteine + [acceptor protein]-L-lysine = [E2 ubiquitin-conjugating enzyme]-L-cysteine + N(6)-ubiquitinyl-[acceptor protein]-L-lysine.. It functions in the pathway protein modification; protein ubiquitination. Capsid-specific restriction factor that prevents infection from non-host-adapted retroviruses. Blocks viral replication early in the life cycle, after viral entry but before reverse transcription. In addition to acting as a capsid-specific restriction factor, also acts as a pattern recognition receptor that activates innate immune signaling in response to the retroviral capsid lattice. Binding to the viral capsid triggers its E3 ubiquitin ligase activity, and in concert with the heterodimeric ubiquitin conjugating enzyme complex UBE2V1-UBE2N (also known as UBC13-UEV1A complex) generates 'Lys-63'-linked polyubiquitin chains, which in turn are catalysts in the autophosphorylation of the MAP3K7/TAK1 complex (includes TAK1, TAB2, and TAB3). Activation of the MAP3K7/TAK1 complex by autophosphorylation results in the induction and expression of NF-kappa-B and MAPK-responsive inflammatory genes, thereby leading to an innate immune response in the infected cell. Restricts infection by simian immunodeficiency virus (SIV-mac). Plays a role in regulating autophagy through activation of autophagy regulator BECN1 by causing its dissociation from its inhibitors BCL2 and TAB2. In Saimiri sciureus (Common squirrel monkey), this protein is Tripartite motif-containing protein 5 (TRIM5).